The sequence spans 438 residues: Phospholipase D Y (438 aa).

An N-terminal signal peptide occupies residues 1–19; the sequence is MIINRLFIIIVLFFVNVNS. A glycan (N-linked (GlcNAc...) asparagine) is linked at N50. The 28-residue stretch at 145–172 folds into the PLD phosphodiesterase 1 domain; the sequence is GSGVLHTKLIIIDESSAYVGSANADWSS. Residues H150, K152, and D157 contribute to the active site. 3 N-linked (GlcNAc...) asparagine glycosylation sites follow: N223, N336, and N394. The PLD phosphodiesterase 2 domain maps to 373–399; it reads YTRVNHAKFMVTEKQSYVGTSNWSQDY.

Belongs to the phospholipase D family.

The catalysed reaction is a 1,2-diacyl-sn-glycero-3-phosphocholine + H2O = a 1,2-diacyl-sn-glycero-3-phosphate + choline + H(+). Its activity is regulated as follows. Inhibited by butan-1-ol. Functionally, hydrolyzes membrane phospholipids, such as PtdCho (phosphatidylcholine), producing the free headgroup and PtdOH (phosphatidic acid; signaling molecule on its own). The polypeptide is Phospholipase D Y (pldY) (Dictyostelium discoideum (Social amoeba)).